A 144-amino-acid polypeptide reads, in one-letter code: Cell division protein SepF (144 aa).

Belongs to the SepF family. In terms of assembly, homodimer. Interacts with FtsZ.

The protein localises to the cytoplasm. Its function is as follows. Cell division protein that is part of the divisome complex and is recruited early to the Z-ring. Probably stimulates Z-ring formation, perhaps through the cross-linking of FtsZ protofilaments. Its function overlaps with FtsA. The protein is Cell division protein SepF of Oceanobacillus iheyensis (strain DSM 14371 / CIP 107618 / JCM 11309 / KCTC 3954 / HTE831).